A 31-amino-acid chain; its full sequence is Photosystem I reaction center subunit XII (31 aa).

A helical membrane pass occupies residues 7 to 26; that stretch reads QISIILLIALIPAFFSLKLG.

Belongs to the PsaM family.

The protein resides in the plastid. The protein localises to the chloroplast thylakoid membrane. This chain is Photosystem I reaction center subunit XII, found in Euglena myxocylindracea.